The sequence spans 122 residues: Small ribosomal subunit protein uS13 (122 aa).

Residues 93-122 (RRGLPVRGQRTKTNARTRKGPKKTVAGKKK) form a disordered region.

It belongs to the universal ribosomal protein uS13 family. As to quaternary structure, part of the 30S ribosomal subunit. Forms a loose heterodimer with protein S19. Forms two bridges to the 50S subunit in the 70S ribosome.

In terms of biological role, located at the top of the head of the 30S subunit, it contacts several helices of the 16S rRNA. In the 70S ribosome it contacts the 23S rRNA (bridge B1a) and protein L5 of the 50S subunit (bridge B1b), connecting the 2 subunits; these bridges are implicated in subunit movement. Contacts the tRNAs in the A and P-sites. The protein is Small ribosomal subunit protein uS13 of Micrococcus luteus (strain ATCC 4698 / DSM 20030 / JCM 1464 / CCM 169 / CCUG 5858 / IAM 1056 / NBRC 3333 / NCIMB 9278 / NCTC 2665 / VKM Ac-2230) (Micrococcus lysodeikticus).